Here is a 366-residue protein sequence, read N- to C-terminus: Bacteriochlorophyll a protein (366 aa).

Positions 111, 146, 290, 297, and 298 each coordinate bacteriochlorophyll a.

As to quaternary structure, homotrimer. Each subunit contains 7 molecules of bacteriochlorophyll a.

Intermediary in the transfer of excitation energy from the chlorophyll to the reaction centers. The chain is Bacteriochlorophyll a protein (fmoA) from Chlorobaculum tepidum (strain ATCC 49652 / DSM 12025 / NBRC 103806 / TLS) (Chlorobium tepidum).